We begin with the raw amino-acid sequence, 2873 residues long: Fibrillin-1 (2873 aa).

Positions Met1 to Gly24 are cleaved as a signal peptide. Residues Ala25–Arg44 constitute a propeptide that is removed on maturation. Positions Arg45 to Ile81 are fibrillin unique N-terminal (FUN) domain. The N-terminal domain stretch occupies residues Arg45–Thr452. 11 disulfide bridges follow: Cys59/Cys68, Cys67/Cys80, Cys85/Cys94, Cys89/Cys100, Cys102/Cys111, Cys119/Cys129, Cys123/Cys134, Cys136/Cys145, Cys150/Cys160, Cys154/Cys166, and Cys168/Cys177. EGF-like domains follow at residues Ile81–Gly112, Ser115–Gly146, and Gln147–Glu178. Positions Cys119–Val329 are interaction with MFAP4. Positions Gly184 to Ile236 constitute a TB 1 domain. Residues Cys195–Cys221 are hybrid domain 1. One can recognise an EGF-like 4; calcium-binding domain in the interval Asp246–Glu287. 6 disulfides stabilise this stretch: Cys250–Cys262, Cys257–Cys271, Cys273–Cys286, Cys292–Cys304, Cys299–Cys313, and Cys315–Cys328. Ser268 carries an O-linked (Glc) serine glycan. Residues Asp288–Val329 form the EGF-like 5; calcium-binding domain. In terms of domain architecture, TB 2 spans Gly334 to Cys389. Asn450 carries an N-linked (GlcNAc...) asparagine glycan. In terms of domain architecture, EGF-like 6 spans Val451–Ile491. Cystine bridges form between Cys455-Cys467, Cys462-Cys476, Cys478-Cys490, Cys496-Cys506, Cys501-Cys515, Cys517-Cys530, Cys536-Cys548, Cys543-Cys557, Cys559-Cys572, Cys578-Cys589, Cys584-Cys598, Cys600-Cys613, Cys619-Cys630, Cys625-Cys639, and Cys641-Cys654. O-linked (Glc) serine glycosylation is present at Ser473. In terms of domain architecture, EGF-like 7; calcium-binding spans Asp492–Arg531. O-linked (Glc) serine glycosylation is present at Ser512. The EGF-like 8; calcium-binding domain occupies Asp532–Glu573. The region spanning Asp574–Lys614 is the EGF-like 9; calcium-binding domain. Residues Asp615 to Val655 form the EGF-like 10; calcium-binding domain. The region spanning Ser661 to Cys713 is the TB 3 domain. The EGF-like 11; calcium-binding domain maps to Asp725 to Val766. 16 cysteine pairs are disulfide-bonded: Cys729–Cys741, Cys736–Cys750, Cys752–Cys765, Cys771–Cys783, Cys778–Cys792, Cys794–Cys807, Cys813–Cys823, Cys818–Cys832, Cys834–Cys847, Cys855–Cys877, Cys864–Cys889, Cys878–Cys892, Cys898–Cys910, Cys916–Cys928, Cys923–Cys937, and Cys939–Cys952. The EGF-like 12; calcium-binding domain maps to Asp767–Glu808. Residues Asp809–Ile848 enclose the EGF-like 13; calcium-binding domain. Positions Gly853–Arg904 constitute a TB 4 domain. The segment at Gly862–Ser887 is hybrid domain 2. One can recognise an EGF-like 14; calcium-binding domain in the interval Asp912 to Leu953. Residues Glu958 to Cys1010 enclose the TB 5 domain. The EGF-like 15; calcium-binding domain maps to Asp1030 to Thr1071. Cystine bridges form between Cys1034–Cys1046, Cys1041–Cys1055, Cys1057–Cys1070, Cys1076–Cys1088, Cys1083–Cys1097, Cys1099–Cys1113, Cys1119–Cys1131, Cys1126–Cys1140, Cys1142–Cys1155, Cys1161–Cys1173, Cys1168–Cys1182, Cys1184–Cys1197, Cys1203–Cys1214, Cys1210–Cys1223, Cys1225–Cys1238, Cys1244–Cys1256, Cys1251–Cys1265, Cys1267–Cys1280, Cys1286–Cys1298, Cys1293–Cys1307, Cys1309–Cys1322, Cys1328–Cys1341, Cys1335–Cys1350, Cys1352–Cys1363, Cys1369–Cys1382, Cys1376–Cys1391, Cys1393–Cys1404, Cys1410–Cys1422, Cys1417–Cys1431, Cys1433–Cys1446, Cys1452–Cys1463, Cys1458–Cys1472, Cys1474–Cys1487, Cys1493–Cys1504, Cys1499–Cys1513, Cys1515–Cys1528, Cys1536–Cys1564, Cys1551–Cys1576, Cys1565–Cys1579, Cys1566–Cys1591, Cys1612–Cys1624, Cys1619–Cys1633, Cys1635–Cys1648, Cys1654–Cys1665, Cys1660–Cys1674, and Cys1676–Cys1689. Residue Asn1069 is glycosylated (N-linked (GlcNAc...) asparagine). The EGF-like 16; calcium-binding domain maps to Asp1072 to Met1114. Positions Asp1115 to Ile1156 constitute an EGF-like 17; calcium-binding domain. O-linked (Glc) serine glycosylation occurs at Ser1137. Asn1151 carries an N-linked (GlcNAc...) asparagine glycan. Positions Asp1157–Val1198 constitute an EGF-like 18; calcium-binding domain. An EGF-like 19; calcium-binding domain is found at Asp1199–Thr1239. The O-linked (Glc) serine glycan is linked to Ser1220. An EGF-like 20; calcium-binding domain is found at Asp1240–Val1281. Residues Asp1282–Thr1323 form the EGF-like 21; calcium-binding domain. O-linked (Glc) serine glycosylation is present at Ser1304. Positions Asp1324–Thr1364 constitute an EGF-like 22; calcium-binding domain. O-linked (Glc) serine glycosylation is present at Ser1347. The 41-residue stretch at Asp1365–Thr1405 folds into the EGF-like 23; calcium-binding domain. Asn1371 carries an N-linked (GlcNAc...) asparagine glycan. O-linked (Glc) serine glycosylation is present at Ser1388. The region spanning Asp1406 to Glu1447 is the EGF-like 24; calcium-binding domain. Positions Asp1448–Thr1488 constitute an EGF-like 25; calcium-binding domain. The N-linked (GlcNAc...) asparagine glycan is linked to Asn1486. The EGF-like 26; calcium-binding domain occupies Asp1489–Val1529. An O-linked (Glc) serine glycan is attached at Ser1510. Residues Asp1530–Arg2733 are C-terminal domain. Residues Gly1534–Cys1591 enclose the TB 6 domain. A Cell attachment site motif is present at residues Arg1543–Asp1545. An N-linked (GlcNAc...) asparagine glycan is attached at Asn1583. The 42-residue stretch at Asp1608–Asp1649 folds into the EGF-like 27; calcium-binding domain. The O-linked (Glc) serine glycan is linked to Ser1630. The region spanning Asp1650–Met1690 is the EGF-like 28; calcium-binding domain. Residue Asn1671 is glycosylated (N-linked (GlcNAc...) asparagine). Residues Ser1695–Cys1750 enclose the TB 7 domain. Residues Asn1705 and Asn1715 are each glycosylated (N-linked (GlcNAc...) asparagine). Residues Asp1768–Glu1809 form the EGF-like 29; calcium-binding domain. 40 disulfides stabilise this stretch: Cys1772–Cys1784, Cys1779–Cys1793, Cys1795–Cys1808, Cys1814–Cys1826, Cys1820–Cys1835, Cys1837–Cys1849, Cys1855–Cys1867, Cys1862–Cys1876, Cys1878–Cys1891, Cys1897–Cys1907, Cys1902–Cys1916, Cys1918–Cys1930, Cys1936–Cys1949, Cys1944–Cys1958, Cys1960–Cys1973, Cys1979–Cys1991, Cys1986–Cys2000, Cys2002–Cys2013, Cys2019–Cys2031, Cys2026–Cys2040, Cys2042–Cys2055, Cys2063–Cys2085, Cys2072–Cys2098, Cys2086–Cys2101, Cys2087–Cys2113, Cys2133–Cys2144, Cys2139–Cys2153, Cys2155–Cys2166, Cys2172–Cys2183, Cys2178–Cys2192, Cys2194–Cys2206, Cys2212–Cys2223, Cys2219–Cys2232, Cys2234–Cys2247, Cys2253–Cys2267, Cys2260–Cys2276, Cys2278–Cys2291, Cys2297–Cys2309, Cys2304–Cys2318, and Cys2320–Cys2333. One can recognise an EGF-like 30; calcium-binding domain in the interval Asp1810 to Asn1850. A glycan (O-linked (Glc) serine) is linked at Ser1832. The 42-residue stretch at Asp1851 to Leu1892 folds into the EGF-like 31; calcium-binding domain. An O-linked (Glc) serine glycan is attached at Ser1873. In terms of domain architecture, EGF-like 32; calcium-binding spans Asp1893–Ile1931. A glycan (N-linked (GlcNAc...) asparagine) is linked at Asn1904. Residue Ser1913 is glycosylated (O-linked (Glc) serine). In terms of domain architecture, EGF-like 33; calcium-binding spans Asp1932–Val1974. O-linked (Glc) serine glycosylation occurs at Ser1955. In terms of domain architecture, EGF-like 34; calcium-binding spans Asp1975 to Glu2014. The EGF-like 35; calcium-binding domain maps to Asp2015–Gln2056. An O-linked (Glc) serine glycan is attached at Ser2037. The region spanning Ser2061–Cys2113 is the TB 8 domain. Asn2079 is a glycosylation site (N-linked (GlcNAc...) asparagine). The EGF-like 36; calcium-binding domain maps to Asp2129–Val2167. Residue Ser2150 is glycosylated (O-linked (Glc) serine). The region spanning Asp2168–Glu2207 is the EGF-like 37; calcium-binding domain. N-linked (GlcNAc...) asparagine glycosylation is present at Asn2180. The EGF-like 38; calcium-binding domain occupies Asp2208 to Lys2248. Ser2229 carries O-linked (Glc) serine glycosylation. Residues Asp2249–Ile2292 form the EGF-like 39; calcium-binding domain. One can recognise an EGF-like 40; calcium-binding domain in the interval Asp2293–Leu2334. An O-linked (Glc) serine glycan is attached at Ser2315. In terms of domain architecture, TB 9 spans Gly2339–Cys2392. The region spanning Asp2404 to Val2445 is the EGF-like 41; calcium-binding domain. Cystine bridges form between Cys2408–Cys2420, Cys2415–Cys2429, Cys2431–Cys2444, Cys2450–Cys2461, Cys2457–Cys2470, Cys2472–Cys2485, Cys2491–Cys2502, Cys2498–Cys2511, Cys2513–Cys2524, Cys2530–Cys2543, Cys2537–Cys2552, Cys2554–Cys2567, Cys2573–Cys2583, Cys2579–Cys2592, Cys2594–Cys2607, Cys2613–Cys2624, Cys2619–Cys2633, Cys2635–Cys2648, Cys2654–Cys2665, Cys2661–Cys2674, and Cys2676–Cys2688. An EGF-like 42; calcium-binding domain is found at Asp2446–Lys2486. An O-linked (Glc) serine glycan is attached at Ser2467. The EGF-like 43; calcium-binding domain occupies Asp2487–Ile2525. The EGF-like 44; calcium-binding domain occupies Asp2526 to Glu2568. Ser2549 carries O-linked (Glc) serine glycosylation. In terms of domain architecture, EGF-like 45; calcium-binding spans Asp2569–Val2608. Residues Asp2609 to Gln2649 form the EGF-like 46; calcium-binding domain. A glycan (O-linked (Glc) serine) is linked at Ser2630. The 40-residue stretch at Asp2650–Val2689 folds into the EGF-like 47; calcium-binding domain. Residues Ser2704, Ser2705, and Ser2711 each carry the phosphoserine modification. Positions Arg2728–Ser2747 are disordered. N-linked (GlcNAc...) asparagine glycosylation is found at Asn2736, Asn2752, and Asn2769.

It belongs to the fibrillin family. Interacts with COL16A1. Interacts with integrin alpha-V/beta-3. Interacts with ADAMTS10; this interaction promotes microfibril assembly. Interacts with THSD4; this interaction promotes fibril formation. Interacts (via N-terminal domain) with FBLN2 and FBLN5. Interacts with ELN. Forms a ternary complex with ELN and FBLN2 or FBLN5 and a significant interaction with ELN seen only in the presence of FBLN2 or FBLN5. Interacts (via N-terminal domain) with LTBP2 (via C-terminal domain) in a Ca(+2)-dependent manner. Interacts (via N-terminal domain) with LTBP1 (via C-terminal domain). Interacts with integrins ITGA5:ITGB1, ITGAV:ITGB3 and ITGAV:ITGB6. Interacts (via N-terminal domain) with BMP2, BMP4, BMP7, BMP10 and GDF5. Interacts (via N-terminal domain) with MFAP2 and MFAP5. Interacts with ADAMTSL5. Interacts with MFAP4. Interacts (via N-terminal domain) with TNFSF11 in a Ca(+2)-dependent manner. Interacts (via N-terminal domain) with EFEMP2; this interaction inhibits EFEMP2 binding to LOX and ELN. Post-translationally, cleavage of N- and C-terminus by furin is required for incorporation into the extracellular matrix and assembly into microfibrils. The C-terminus, which corresponds to the Asprosin chain, was initially thought to constitute a propeptide. Fibrillin-1 and Asprosin chains are still linked together during the secretion from cells, but are subsequently separated by furin, an essential step for incorporation of Fibrillin-1 into the nascent microfibrils. In terms of processing, forms intermolecular disulfide bonds either with other fibrillin-1 molecules or with other components of the microfibrils. O-glycosylated on serine residues by POGLUT2 and POGLUT3 which is necessary for efficient protein secretion. In terms of tissue distribution, strongly expressed during the first week of osteoblast differentiation. Secreted by white adipose tissue (at protein level).

The protein resides in the secreted. It is found in the extracellular space. The protein localises to the extracellular matrix. Structural component of the 10-12 nm diameter microfibrils of the extracellular matrix, which conveys both structural and regulatory properties to load-bearing connective tissues. Fibrillin-1-containing microfibrils provide long-term force bearing structural support. In tissues such as the lung, blood vessels and skin, microfibrils form the periphery of the elastic fiber, acting as a scaffold for the deposition of elastin. In addition, microfibrils can occur as elastin-independent networks in tissues such as the ciliary zonule, tendon, cornea and glomerulus where they provide tensile strength and have anchoring roles. Fibrillin-1 also plays a key role in tissue homeostasis through specific interactions with growth factors, such as the bone morphogenetic proteins (BMPs), growth and differentiation factors (GDFs) and latent transforming growth factor-beta-binding proteins (LTBPs), cell-surface integrins and other extracellular matrix protein and proteoglycan components. Regulates osteoblast maturation by controlling TGF-beta bioavailability and calibrating TGF-beta and BMP levels, respectively. Negatively regulates osteoclastogenesis by binding and sequestering an osteoclast differentiation and activation factor TNFSF11. This leads to disruption of TNFSF11-induced Ca(2+) signaling and impairment of TNFSF11-mediated nuclear translocation and activation of transcription factor NFATC1 which regulates genes important for osteoclast differentiation and function. Mediates cell adhesion via its binding to cell surface receptors integrins ITGAV:ITGB3 and ITGA5:ITGB1. Binds heparin and this interaction plays an important role in the assembly of microfibrils. Its function is as follows. Adipokine secreted by white adipose tissue that plays an important regulatory role in the glucose metabolism of liver, muscle and pancreas. Hormone that targets the liver in response to fasting to increase plasma glucose levels. Binds the olfactory receptor Olfr734 at the surface of hepatocytes and promotes hepatocyte glucose release by activating the protein kinase A activity in the liver, resulting in rapid glucose release into the circulation. May act as a regulator of adaptive thermogenesis by inhibiting browning and energy consumption, while increasing lipid deposition in white adipose tissue. Also acts as an orexigenic hormone that increases appetite: crosses the blood brain barrier and exerts effects on the hypothalamus. In the arcuate nucleus of the hypothalamus, asprosin directly activates orexigenic AgRP neurons and indirectly inhibits anorexigenic POMC neurons, resulting in appetite stimulation. Activates orexigenic AgRP neurons via binding to the olfactory receptor Olfr734. May also play a role in sperm motility in testis via interaction with Olfr734 receptor. This Mus musculus (Mouse) protein is Fibrillin-1.